The primary structure comprises 370 residues: Cyclic AMP-responsive element-binding protein 3-like protein 4 (370 aa).

Positions 1–55 (MELGCPELLEPPEDIFSTGSFLELGFNGPASKVPVTRGLQKSEPDDFLNLFIDPN) are required for transcriptional activation. At 1–271 (MELGCPELLE…QTSSRAAQTS (271 aa)) the chain is on the cytoplasmic side. Residues 61 to 85 (ETSPGRDSGVSEDPGSPAQQASSSP) form a disordered region. A compositionally biased stretch (low complexity) spans 76–85 (SPAQQASSSP). Residues 193–256 (ILKKIRRKIR…IFLMEQVRQL (64 aa)) enclose the bZIP domain. Residues 195–234 (KKIRRKIRNKQSAQDSRRRKKEYLDGLESRVAACSEQNQK) are basic motif. The segment at 235-256 (LQRKVQELERQNIFLMEQVRQL) is leucine-zipper. Residues 272–292 (TCVLILLFSLALIILPSFSPF) form a helical; Signal-anchor for type II membrane protein membrane-spanning segment. Residues 293 to 370 (QGQSEARPED…IRGMVHTDEM (78 aa)) lie on the Lumenal side of the membrane. 2 N-linked (GlcNAc...) asparagine glycosylation sites follow: Asn318 and Asn342.

This sequence belongs to the bZIP family. ATF subfamily. In terms of assembly, binds DNA as a dimer. Forms a heterodimer with CREM isoform Tau. Post-translationally, controlled by regulated intramembrane proteolysis (RIP). Following ER stress a fragment containing the cytoplasmic transcription factor domain is released by proteolysis. The cleavage seems to be performed sequentially by site-1 and site-2 proteases (PS1 and PS2). PS1 cleavage may be suppressed by a determinant in the C-terminal region. As to expression, predominantly expressed at high levels in testis with isoform 2 being the predominant isoform. Specifically expressed in postmeiotic spermatids and accumulates in the mid/late stage (at protein level). Ubiquitously expressed at low levels.

The protein localises to the endoplasmic reticulum membrane. Its subcellular location is the cytoplasmic vesicle. It localises to the secretory vesicle. It is found in the acrosome inner membrane. The protein resides in the nucleus. Transcriptional activator that may play a role in the unfolded protein response of the testis. Proposed to be involved in spermiogenesis. May be involved in regulating the maturation of sperm head nuclei. Alternatively proposed to be a paternally delivered transcription factor that may function in early zygotic gene activation. Increases the binding of CREM isoform Tau with CRE. The CREM isoform Tau-CREB3L4 heterodimer functions through CRE but not through UPRE and may recruit HIRA to CRE to regulate histone exchange. This Mus musculus (Mouse) protein is Cyclic AMP-responsive element-binding protein 3-like protein 4 (Creb3l4).